Reading from the N-terminus, the 424-residue chain is Folate-like transporter 3 (424 aa).

Residue Asn35 is glycosylated (N-linked (GlcNAc...) asparagine). 5 consecutive transmembrane segments (helical) span residues 55–75, 78–98, 101–119, 136–156, and 164–184; these read VALI…ILII, LSYF…CMQL, LFYG…YIYV, ALLV…GLNW, and IINL…PHVP. N-linked (GlcNAc...) asparagine glycosylation is present at Asn254. The next 3 membrane-spanning stretches (helical) occupy residues 313-333, 361-381, and 392-412; these read GLLF…CYII, LFGI…AIVI, and FVVY…IFGI.

It belongs to the reduced folate carrier (RFC) transporter (TC 2.A.48) family.

It localises to the membrane. This chain is Folate-like transporter 3 (folt-3), found in Caenorhabditis elegans.